Reading from the N-terminus, the 263-residue chain is Post-GPI attachment to proteins factor 2 (263 aa).

6 consecutive transmembrane segments (helical) span residues 16-36 (FVIC…ILSL), 69-89 (YIWR…AIAF), 109-129 (FLCN…LALT), 143-163 (CFGG…WLFN), 180-200 (YKIL…YLYW), and 208-228 (PGIY…NIFF).

The protein belongs to the PGAP2 family.

It localises to the golgi apparatus membrane. It is found in the endoplasmic reticulum membrane. Functionally, involved in the lipid remodeling steps of GPI-anchor maturation. Required for stable expression of GPI-anchored proteins at the cell surface. The chain is Post-GPI attachment to proteins factor 2 from Caenorhabditis elegans.